A 364-amino-acid chain; its full sequence is Fructose-1,6-bisphosphatase class 1 3 (364 aa).

Positions 101, 123, 125, and 126 each coordinate Mg(2+). Residues 126–129 and Asn-218 contribute to the substrate site; that span reads DGSS. Glu-290 contacts Mg(2+).

It belongs to the FBPase class 1 family. As to quaternary structure, homotetramer. It depends on Mg(2+) as a cofactor.

It is found in the cytoplasm. The catalysed reaction is beta-D-fructose 1,6-bisphosphate + H2O = beta-D-fructose 6-phosphate + phosphate. It functions in the pathway carbohydrate biosynthesis; gluconeogenesis. The polypeptide is Fructose-1,6-bisphosphatase class 1 3 (Cupriavidus necator (strain ATCC 17699 / DSM 428 / KCTC 22496 / NCIMB 10442 / H16 / Stanier 337) (Ralstonia eutropha)).